The chain runs to 21 residues: LIGPVLGLVGSALGGLLKKIG.

I2 carries the post-translational modification D-allo-isoleucine. I20 is modified (isoleucine amide).

This sequence belongs to the bombinin family. Expressed by the skin glands.

The protein resides in the secreted. Has antimicrobial and hemolytic activities. The polypeptide is Bombinin-H4 (Bombina variegata (Yellow-bellied toad)).